The sequence spans 161 residues: Cysteine dioxygenase (161 aa).

Fe cation contacts are provided by His-75, His-77, and His-125.

Belongs to the cysteine dioxygenase family. It depends on Fe cation as a cofactor.

The catalysed reaction is L-cysteine + O2 = 3-sulfino-L-alanine + H(+). The polypeptide is Cysteine dioxygenase (cdoA) (Bacillus subtilis (strain 168)).